The chain runs to 637 residues: Penicillin-binding protein 1A (637 aa).

A transglycosylase region spans residues 62 to 224; that stretch reads LIADLGSERR…NQYDPYSHPE (163 aa). Glu91 (proton donor; for transglycosylase activity) is an active-site residue. The interval 298 to 612 is transpeptidase; it reads EVYTNVDSKV…RLTPIVGDGF (315 aa). Residue Ser371 is the Acyl-ester intermediate; for transpeptidase activity of the active site.

In the N-terminal section; belongs to the glycosyltransferase 51 family. It in the C-terminal section; belongs to the transpeptidase family.

The protein localises to the secreted. The catalysed reaction is [GlcNAc-(1-&gt;4)-Mur2Ac(oyl-L-Ala-gamma-D-Glu-L-Lys-D-Ala-D-Ala)](n)-di-trans,octa-cis-undecaprenyl diphosphate + beta-D-GlcNAc-(1-&gt;4)-Mur2Ac(oyl-L-Ala-gamma-D-Glu-L-Lys-D-Ala-D-Ala)-di-trans,octa-cis-undecaprenyl diphosphate = [GlcNAc-(1-&gt;4)-Mur2Ac(oyl-L-Ala-gamma-D-Glu-L-Lys-D-Ala-D-Ala)](n+1)-di-trans,octa-cis-undecaprenyl diphosphate + di-trans,octa-cis-undecaprenyl diphosphate + H(+). The enzyme catalyses Preferential cleavage: (Ac)2-L-Lys-D-Ala-|-D-Ala. Also transpeptidation of peptidyl-alanyl moieties that are N-acyl substituents of D-alanine.. It functions in the pathway cell wall biogenesis; peptidoglycan biosynthesis. In terms of biological role, cell wall formation. The polypeptide is Penicillin-binding protein 1A (ponA) (Streptococcus oralis).